The chain runs to 131 residues: Glycine cleavage system H protein (131 aa).

In terms of domain architecture, Lipoyl-binding spans 24–106; it reads RAIVGISDHA…YGEGWIMVIE (83 aa). Lys65 carries the post-translational modification N6-lipoyllysine.

This sequence belongs to the GcvH family. The glycine cleavage system is composed of four proteins: P, T, L and H. (R)-lipoate is required as a cofactor.

The glycine cleavage system catalyzes the degradation of glycine. The H protein shuttles the methylamine group of glycine from the P protein to the T protein. The chain is Glycine cleavage system H protein from Xylella fastidiosa (strain M12).